Here is a 216-residue protein sequence, read N- to C-terminus: Uracil phosphoribosyltransferase (216 aa).

5-phospho-alpha-D-ribose 1-diphosphate contacts are provided by residues arginine 85, arginine 110, and aspartate 136–serine 144. Uracil-binding positions include isoleucine 201 and glycine 206–alanine 208. Position 207 (aspartate 207) interacts with 5-phospho-alpha-D-ribose 1-diphosphate.

Belongs to the UPRTase family. Mg(2+) is required as a cofactor.

It carries out the reaction UMP + diphosphate = 5-phospho-alpha-D-ribose 1-diphosphate + uracil. Its pathway is pyrimidine metabolism; UMP biosynthesis via salvage pathway; UMP from uracil: step 1/1. Its activity is regulated as follows. Allosterically activated by GTP. Catalyzes the conversion of uracil and 5-phospho-alpha-D-ribose 1-diphosphate (PRPP) to UMP and diphosphate. This is Uracil phosphoribosyltransferase from Rhodospirillum centenum (strain ATCC 51521 / SW).